Here is a 123-residue protein sequence, read N- to C-terminus: MTRTDTRAGVGALGEQLAVDYLQGLGLRVLARNWRCRYGELDVVVADDAVQAVVFVEVKTRTTDRFGGVAEAVTPVKVRRLRRLAGLWLSEQDARWESVRLDVVTVRIGQGRSPELTHIEGVG.

Belongs to the UPF0102 family.

The chain is UPF0102 protein Mflv_4140 from Mycolicibacterium gilvum (strain PYR-GCK) (Mycobacterium gilvum (strain PYR-GCK)).